Reading from the N-terminus, the 252-residue chain is Glucosamine-6-phosphate deaminase (252 aa).

Asp-64 acts as the Proton acceptor; for enolization step in catalysis. Residue Asn-130 is the For ring-opening step of the active site. His-132 serves as the catalytic Proton acceptor; for ring-opening step. The active-site For ring-opening step is Glu-137.

Belongs to the glucosamine/galactosamine-6-phosphate isomerase family. NagB subfamily.

It catalyses the reaction alpha-D-glucosamine 6-phosphate + H2O = beta-D-fructose 6-phosphate + NH4(+). It participates in amino-sugar metabolism; N-acetylneuraminate degradation; D-fructose 6-phosphate from N-acetylneuraminate: step 5/5. Functionally, catalyzes the reversible isomerization-deamination of glucosamine 6-phosphate (GlcN6P) to form fructose 6-phosphate (Fru6P) and ammonium ion. In Exiguobacterium sibiricum (strain DSM 17290 / CCUG 55495 / CIP 109462 / JCM 13490 / 255-15), this protein is Glucosamine-6-phosphate deaminase.